A 207-amino-acid chain; its full sequence is ATP-dependent Clp protease proteolytic subunit 2 (207 aa).

Residue serine 102 is the Nucleophile of the active site. Residue histidine 127 is part of the active site.

The protein belongs to the peptidase S14 family. Fourteen ClpP subunits assemble into 2 heptameric rings which stack back to back to give a disk-like structure with a central cavity, resembling the structure of eukaryotic proteasomes.

It localises to the cytoplasm. It carries out the reaction Hydrolysis of proteins to small peptides in the presence of ATP and magnesium. alpha-casein is the usual test substrate. In the absence of ATP, only oligopeptides shorter than five residues are hydrolyzed (such as succinyl-Leu-Tyr-|-NHMec, and Leu-Tyr-Leu-|-Tyr-Trp, in which cleavage of the -Tyr-|-Leu- and -Tyr-|-Trp bonds also occurs).. Its function is as follows. Cleaves peptides in various proteins in a process that requires ATP hydrolysis. Has a chymotrypsin-like activity. Plays a major role in the degradation of misfolded proteins. The protein is ATP-dependent Clp protease proteolytic subunit 2 of Bifidobacterium longum (strain NCC 2705).